Consider the following 136-residue polypeptide: Regulator of nucleoside diphosphate kinase (136 aa).

This sequence belongs to the Rnk family. Interacts with the RNA polymerase.

Functionally, may act as an anti-Gre factor. This is Regulator of nucleoside diphosphate kinase from Escherichia coli O6:H1 (strain CFT073 / ATCC 700928 / UPEC).